The following is a 200-amino-acid chain: Holliday junction resolvase RecU (200 aa).

Residues Thr-82, Asp-84, Glu-97, and Gln-116 each coordinate Mg(2+).

Belongs to the RecU family. Mg(2+) is required as a cofactor.

Its subcellular location is the cytoplasm. It carries out the reaction Endonucleolytic cleavage at a junction such as a reciprocal single-stranded crossover between two homologous DNA duplexes (Holliday junction).. Its function is as follows. Endonuclease that resolves Holliday junction intermediates in genetic recombination. Cleaves mobile four-strand junctions by introducing symmetrical nicks in paired strands. Promotes annealing of linear ssDNA with homologous dsDNA. Required for DNA repair, homologous recombination and chromosome segregation. In Streptococcus sanguinis (strain SK36), this protein is Holliday junction resolvase RecU.